Consider the following 745-residue polypeptide: Junction plakoglobin (745 aa).

Position 1 is an N-acetylmethionine (Met-1). O-linked (GlcNAc) threonine glycosylation is present at Thr-14. Residues Ser-99 and Ser-125 each carry the phosphoserine modification. ARM repeat units follow at residues Asn-132–Lys-171, Lys-172–His-215, Arg-216–Leu-255, Glu-258–Tyr-297, Gly-298–Cys-341, Pro-342–Asp-381, Ala-383–Cys-420, Ser-423–Ser-464, Glu-470–Leu-510, Pro-512–Thr-551, Pro-574–Gln-613, and Lys-615–Arg-661. The tract at residues Asn-132 to Tyr-297 is interaction with DSC1 and DSG1. Position 182 is a phosphoserine (Ser-182). An interaction with DSC1 region spans residues Pro-574–Arg-661. Ser-665 and Ser-730 each carry phosphoserine.

The protein belongs to the beta-catenin family. As to quaternary structure, homodimer. Component of an E-cadherin/catenin adhesion complex composed of at least E-cadherin/CDH1 and gamma-catenin/JUP, and possibly alpha-catenin/CTNNA1; the complex is located to adherens junctions. The stable association of CTNNA1 is controversial as CTNNA1 was shown not to bind to F-actin when assembled in the complex. Interacts with MUC1. Interacts with CAV1. Interacts with PTPRJ. Interacts with DSG1. Interacts with DSC1 and DSC2. Interacts with PKP2. Interacts with PKP3 (via N-terminus); the interaction is required for PKP3 localization to desmosome cell-cell junctions. Interacts with DSG4. Post-translationally, may be phosphorylated by FER. In terms of tissue distribution, expressed in the heart (at protein level).

It localises to the cell junction. The protein resides in the adherens junction. Its subcellular location is the desmosome. It is found in the cytoplasm. The protein localises to the cytoskeleton. It localises to the cell membrane. The protein resides in the nucleus. Common junctional plaque protein. The membrane-associated plaques are architectural elements in an important strategic position to influence the arrangement and function of both the cytoskeleton and the cells within the tissue. The presence of plakoglobin in both the desmosomes and in the intermediate junctions suggests that it plays a central role in the structure and function of submembranous plaques. Acts as a substrate for VE-PTP and is required by it to stimulate VE-cadherin function in endothelial cells. Can replace beta-catenin in E-cadherin/catenin adhesion complexes which are proposed to couple cadherins to the actin cytoskeleton. This is Junction plakoglobin from Rattus norvegicus (Rat).